Here is a 309-residue protein sequence, read N- to C-terminus: Porphobilinogen deaminase (309 aa).

Cys242 bears the S-(dipyrrolylmethanemethyl)cysteine mark.

The protein belongs to the HMBS family. In terms of assembly, monomer. It depends on dipyrromethane as a cofactor.

It carries out the reaction 4 porphobilinogen + H2O = hydroxymethylbilane + 4 NH4(+). It participates in porphyrin-containing compound metabolism; protoporphyrin-IX biosynthesis; coproporphyrinogen-III from 5-aminolevulinate: step 2/4. Tetrapolymerization of the monopyrrole PBG into the hydroxymethylbilane pre-uroporphyrinogen in several discrete steps. The sequence is that of Porphobilinogen deaminase from Syntrophobacter fumaroxidans (strain DSM 10017 / MPOB).